The primary structure comprises 121 residues: Large ribosomal subunit protein uL14 (121 aa).

The protein belongs to the universal ribosomal protein uL14 family. In terms of assembly, part of the 50S ribosomal subunit. Forms a cluster with proteins L3 and L19. In the 70S ribosome, L14 and L19 interact and together make contacts with the 16S rRNA in bridges B5 and B8.

In terms of biological role, binds to 23S rRNA. Forms part of two intersubunit bridges in the 70S ribosome. This chain is Large ribosomal subunit protein uL14, found in Prochlorococcus marinus (strain SARG / CCMP1375 / SS120).